A 121-amino-acid polypeptide reads, in one-letter code: Transposase InsC for insertion element IS2A (121 aa).

Belongs to the transposase 8 family.

Involved in the transposition of the insertion sequence IS2. This Escherichia coli (strain K12) protein is Transposase InsC for insertion element IS2A (insC1).